The chain runs to 277 residues: Orotidine 5'-phosphate decarboxylase (277 aa).

Catalysis depends on Lys93, which acts as the Proton donor.

It belongs to the OMP decarboxylase family. Type 2 subfamily.

It catalyses the reaction orotidine 5'-phosphate + H(+) = UMP + CO2. The protein operates within pyrimidine metabolism; UMP biosynthesis via de novo pathway; UMP from orotate: step 2/2. The sequence is that of Orotidine 5'-phosphate decarboxylase from Haloarcula marismortui (strain ATCC 43049 / DSM 3752 / JCM 8966 / VKM B-1809) (Halobacterium marismortui).